The chain runs to 80 residues: Teretoxin Tsu6.5 (80 aa).

Positions 1–21 (MAINGRLLCLCLVLGLVFESL) are cleaved as a signal peptide. Positions 22 to 42 (GHPSVQEKRAAEDSKPSGERR) are excised as a propeptide.

This sequence belongs to the teretoxin M (TM) superfamily. Post-translationally, contains 3 disulfide bonds. As to expression, expressed by the venom duct.

It localises to the secreted. The polypeptide is Teretoxin Tsu6.5 (Terebra subulata (Chocolate spotted auger)).